A 267-amino-acid polypeptide reads, in one-letter code: Hydroxyethylthiazole kinase (267 aa).

Substrate is bound at residue M51. Positions 127 and 173 each coordinate ATP. Substrate is bound at residue A200.

Belongs to the Thz kinase family. Mg(2+) serves as cofactor.

It carries out the reaction 5-(2-hydroxyethyl)-4-methylthiazole + ATP = 4-methyl-5-(2-phosphooxyethyl)-thiazole + ADP + H(+). Its pathway is cofactor biosynthesis; thiamine diphosphate biosynthesis; 4-methyl-5-(2-phosphoethyl)-thiazole from 5-(2-hydroxyethyl)-4-methylthiazole: step 1/1. Its function is as follows. Catalyzes the phosphorylation of the hydroxyl group of 4-methyl-5-beta-hydroxyethylthiazole (THZ). This is Hydroxyethylthiazole kinase from Psychromonas ingrahamii (strain DSM 17664 / CCUG 51855 / 37).